The chain runs to 394 residues: Acetate kinase (394 aa).

Residue Asn8 coordinates Mg(2+). ATP is bound at residue Lys15. Residue Arg86 participates in substrate binding. Asp143 acts as the Proton donor/acceptor in catalysis. ATP is bound by residues 201-205 (HLGNG), 276-278 (DCR), and 324-328 (GIGEN). Glu378 contributes to the Mg(2+) binding site.

The protein belongs to the acetokinase family. In terms of assembly, homodimer. Mg(2+) is required as a cofactor. It depends on Mn(2+) as a cofactor.

Its subcellular location is the cytoplasm. The catalysed reaction is acetate + ATP = acetyl phosphate + ADP. It functions in the pathway metabolic intermediate biosynthesis; acetyl-CoA biosynthesis; acetyl-CoA from acetate: step 1/2. Functionally, catalyzes the formation of acetyl phosphate from acetate and ATP. Can also catalyze the reverse reaction. The chain is Acetate kinase from Dichelobacter nodosus (strain VCS1703A).